The sequence spans 333 residues: Terpene synthase 2 (333 aa).

Residues 82–87 (DDDLDT) carry the DDxx(x)D/E motif motif. The NDxxSxxxD/E motif signature appears at 219 to 227 (NDCVSYAKE).

Belongs to the terpene synthase family.

The catalysed reaction is (2E,6E)-farnesyl diphosphate = (E)-beta-farnesene + diphosphate. It catalyses the reaction (2E,6E)-farnesyl diphosphate = (1S,2S,4R)-beta-elemene + diphosphate. Its function is as follows. Terpene synthase that converts its substrate farnesyl diphosphate (FPP) into the sesquiterpene (E)-beta-farnesene as major product. Is also able to convert FPP into delta-elemene, beta-elemene, (E)-beta-caryophyllene, 9-epi-(E)-caryophyllene, and a yet unidentified sesquiterpene. This is Terpene synthase 2 from Dictyostelium purpureum (Slime mold).